The chain runs to 226 residues: Biosynthetic peptidoglycan transglycosylase (226 aa).

Residues 10–30 (IIMTLLALLILPYLLIPVYAL) form a helical membrane-spanning segment.

It belongs to the glycosyltransferase 51 family.

It is found in the cell inner membrane. It catalyses the reaction [GlcNAc-(1-&gt;4)-Mur2Ac(oyl-L-Ala-gamma-D-Glu-L-Lys-D-Ala-D-Ala)](n)-di-trans,octa-cis-undecaprenyl diphosphate + beta-D-GlcNAc-(1-&gt;4)-Mur2Ac(oyl-L-Ala-gamma-D-Glu-L-Lys-D-Ala-D-Ala)-di-trans,octa-cis-undecaprenyl diphosphate = [GlcNAc-(1-&gt;4)-Mur2Ac(oyl-L-Ala-gamma-D-Glu-L-Lys-D-Ala-D-Ala)](n+1)-di-trans,octa-cis-undecaprenyl diphosphate + di-trans,octa-cis-undecaprenyl diphosphate + H(+). It participates in cell wall biogenesis; peptidoglycan biosynthesis. Functionally, peptidoglycan polymerase that catalyzes glycan chain elongation from lipid-linked precursors. In Agrobacterium fabrum (strain C58 / ATCC 33970) (Agrobacterium tumefaciens (strain C58)), this protein is Biosynthetic peptidoglycan transglycosylase.